The sequence spans 352 residues: Holliday junction branch migration complex subunit RuvB (352 aa).

The interval 13–201 (FSLRKKELRL…FGISQKIEFY (189 aa)) is large ATPase domain (RuvB-L). Residues Arg-41, Gly-82, Lys-85, Thr-86, Thr-87, 148-150 (EDF), Arg-191, Tyr-201, and Arg-238 contribute to the ATP site. Thr-86 contacts Mg(2+). The small ATPAse domain (RuvB-S) stretch occupies residues 202-273 (TYDELKQIIV…LIKKALNSYQ (72 aa)). Residues 276–352 (EKGLDSLDRN…KYIDSKNENF (77 aa)) are head domain (RuvB-H). Residues Arg-330 and Arg-335 each contribute to the DNA site.

The protein belongs to the RuvB family. As to quaternary structure, homohexamer. Forms an RuvA(8)-RuvB(12)-Holliday junction (HJ) complex. HJ DNA is sandwiched between 2 RuvA tetramers; dsDNA enters through RuvA and exits via RuvB. An RuvB hexamer assembles on each DNA strand where it exits the tetramer. Each RuvB hexamer is contacted by two RuvA subunits (via domain III) on 2 adjacent RuvB subunits; this complex drives branch migration. In the full resolvosome a probable DNA-RuvA(4)-RuvB(12)-RuvC(2) complex forms which resolves the HJ.

The protein localises to the cytoplasm. The catalysed reaction is ATP + H2O = ADP + phosphate + H(+). Its function is as follows. The RuvA-RuvB-RuvC complex processes Holliday junction (HJ) DNA during genetic recombination and DNA repair, while the RuvA-RuvB complex plays an important role in the rescue of blocked DNA replication forks via replication fork reversal (RFR). RuvA specifically binds to HJ cruciform DNA, conferring on it an open structure. The RuvB hexamer acts as an ATP-dependent pump, pulling dsDNA into and through the RuvAB complex. RuvB forms 2 homohexamers on either side of HJ DNA bound by 1 or 2 RuvA tetramers; 4 subunits per hexamer contact DNA at a time. Coordinated motions by a converter formed by DNA-disengaged RuvB subunits stimulates ATP hydrolysis and nucleotide exchange. Immobilization of the converter enables RuvB to convert the ATP-contained energy into a lever motion, pulling 2 nucleotides of DNA out of the RuvA tetramer per ATP hydrolyzed, thus driving DNA branch migration. The RuvB motors rotate together with the DNA substrate, which together with the progressing nucleotide cycle form the mechanistic basis for DNA recombination by continuous HJ branch migration. Branch migration allows RuvC to scan DNA until it finds its consensus sequence, where it cleaves and resolves cruciform DNA. The sequence is that of Holliday junction branch migration complex subunit RuvB from Prochlorococcus marinus (strain MIT 9215).